The sequence spans 198 residues: uncharacterized protein (198 aa).

Residues 1-110 (MTGYFLPPQT…GTTVSDDFEG (110 aa)) form the PA14 domain.

The protein belongs to the flocculin family.

This is an uncharacterized protein from Saccharomyces cerevisiae (strain ATCC 204508 / S288c) (Baker's yeast).